The chain runs to 198 residues: MLYPIPIAKLIESYSKLPGIGVKTATRLAFYTIGMSDEDVNDFAKNLLAAKRELTYCSICGNLTDDDPCHICTDSSRDKETILVVEASKDVSAMEKIQEYHGYYHVLHGLISPMNGVGPDDINLKSLITRLMAGEATEVIVATNATADGEATAMYISRILKPAGIKVTRLARGLAVGSDIEYADEVTLLRAIENRTEL.

The C4-type zinc-finger motif lies at 57–72; the sequence is CSICGNLTDDDPCHIC. The Toprim domain occupies 80–175; sequence ETILVVEASK…KVTRLARGLA (96 aa).

The protein belongs to the RecR family.

Its function is as follows. May play a role in DNA repair. It seems to be involved in an RecBC-independent recombinational process of DNA repair. It may act with RecF and RecO. This chain is Recombination protein RecR, found in Streptococcus equi subsp. zooepidemicus (strain MGCS10565).